The primary structure comprises 239 residues: MRTEAEAAGQPLEPGDFVQLPVPIIQQLYHWDCGLACSRMVLRYLGQLDDGEFENALQELQLTRSIWTIDLAYLMRHFGVRHRFCTQTLGVDKGYKNQSFYRKHFDTEETRVNQLFAQAKACKVQVEKCTVSVQDIQVHLAQGHVAIVLVNSGVLHCDLCSSPVKYCCFTPSGHRCFCRTPDYQGHFIVLRGYNRATGCIFYNNPAYADRMCSTSISNFEEARTSYGTDEDILFVYLDS.

This is Protein GUCD1 (Gucd1) from Mus musculus (Mouse).